The primary structure comprises 166 residues: Immunity protein RhsIB (166 aa).

Immunity component of a toxin-immunity protein module, which functions as a cellular contact-dependent growth inhibition (CDI) system. Specifically inhibits its cognate toxin RhsB. Cell contact is necessary for growth inhibition. The protein is Immunity protein RhsIB (rhsIB) of Dickeya dadantii (strain 3937) (Erwinia chrysanthemi (strain 3937)).